The sequence spans 271 residues: MDKYAVWGNPIAQSRSPQLHRYFAKQTRQNLDYVAILGDEEKFEQQLSDFFAQGAKGCNITAPFKERAFKLAQQHSKRCLSAESCNTLKKLADGTLFADNTDGAGLVSDLQRLNWLKPNQRILILGAGGATKGVLLPLLQAQQNILITNRTFSRAEDLAHKFNHFGTIEALDLEHIPIQTFDLIINATSTGLQGKTIDIDPQILQLASAVYDMQYSKESDTPFIALCKKQGVTKISDGFGMLVGQAAHAFYLWRGVMPEIDPLFSGNEIKI.

Shikimate contacts are provided by residues 14–16 (SRS) and Thr61. Residue Lys65 is the Proton acceptor of the active site. Shikimate contacts are provided by Asn86 and Asp102. NADP(+) contacts are provided by residues 126–130 (GAGGA), 149–154 (NRTFSR), and Met213. Tyr215 contributes to the shikimate binding site. NADP(+) is bound at residue Gly238.

This sequence belongs to the shikimate dehydrogenase family. In terms of assembly, homodimer.

It catalyses the reaction shikimate + NADP(+) = 3-dehydroshikimate + NADPH + H(+). It functions in the pathway metabolic intermediate biosynthesis; chorismate biosynthesis; chorismate from D-erythrose 4-phosphate and phosphoenolpyruvate: step 4/7. In terms of biological role, involved in the biosynthesis of the chorismate, which leads to the biosynthesis of aromatic amino acids. Catalyzes the reversible NADPH linked reduction of 3-dehydroshikimate (DHSA) to yield shikimate (SA). The polypeptide is Shikimate dehydrogenase (NADP(+)) (Histophilus somni (strain 129Pt) (Haemophilus somnus)).